The following is a 343-amino-acid chain: D-beta-hydroxybutyrate dehydrogenase, mitochondrial (343 aa).

The N-terminal 46 residues, 1 to 46 (MLAARLSRPLSQLPGKALSVRDRENGTRHTLLFYPASFSPDTRRTY), are a transit peptide targeting the mitochondrion. An NAD(+)-binding site is contributed by 60 to 84 (ITGCDSGFGFSLAKHLHSKGFLVFA). 2 positions are modified to N6-acetyllysine: Lys73 and Lys97. An N6-acetyllysine; alternate modification is found at Lys103. At Lys103 the chain carries N6-succinyllysine; alternate. N6-acetyllysine is present on residues Lys132 and Lys177. A substrate-binding site is contributed by Met196. The active-site Proton acceptor is the Cys209. Lys212 is subject to N6-acetyllysine. The O-linked (GlcNAc) serine glycan is linked to Ser219. Residue Ser246 is modified to Phosphoserine. Lys258 bears the N6-acetyllysine mark. Lys259 is subject to N6-acetyllysine; alternate. At Lys259 the chain carries N6-succinyllysine; alternate. Lys280 is subject to N6-acetyllysine.

Belongs to the short-chain dehydrogenases/reductases (SDR) family. Homotetramer. In terms of processing, acetylation of Lys-132 is observed in liver mitochondria from fasted mice but not from fed mice.

The protein localises to the mitochondrion inner membrane. It localises to the mitochondrion matrix. The catalysed reaction is (R)-3-hydroxybutanoate + NAD(+) = acetoacetate + NADH + H(+). Its activity is regulated as follows. Requires phosphatidylcholine as an allosteric activator for enzymatic activity. The sequence is that of D-beta-hydroxybutyrate dehydrogenase, mitochondrial from Mus musculus (Mouse).